The following is a 511-amino-acid chain: MRIIPRTMSTQHPDNAKVPEWAKSEVIEGEDEVKEAFLAYSMYGVHEVMWDAEGKDVDTHVVRKLLSNYPDYFREHILGKDVFLTYRLPNPKVEGADRKVFAETMESIPITYDLAEKFYGNGITVPVFEVILPMTTSNLEIISVARYYEKAVANEDELELYDGVKVKDLVGEIYPKVIEVIPLVEDRDSLQNIDNIVEGYYKVIKPKYMRVFLARSDPAMNYGMITAVLSVKIALSELYKLSESLNFEIYPIIGVGSLPFRGHLSPENYEKVLEEYKGVYTYTIQSAFKYDYDYDKVKSAISSINNSRIGPAKILEKYEEDVLRKITILYTERYQPIIESLANAINDVSVLLPRRRARKLHIGLFGYSRSAGKVSLPRAISFVGSLYSIGIPPELIGISSLSNLDEKEWDIFKQNYVNFKHDLQTAARFFNWESFELIKDIWKISEDTIAKIKEDIDYAESVIGIKLGGIDYDSRKHILMSSLFLLSFKEKILQESKKYLYEMALIRRSLG.

The protein belongs to the PEPCase type 2 family. Homotetramer. Mg(2+) serves as cofactor.

It catalyses the reaction oxaloacetate + phosphate = phosphoenolpyruvate + hydrogencarbonate. Its function is as follows. Catalyzes the irreversible beta-carboxylation of phosphoenolpyruvate (PEP) to form oxaloacetate (OAA), a four-carbon dicarboxylic acid source for the tricarboxylic acid cycle. The chain is Phosphoenolpyruvate carboxylase from Saccharolobus islandicus (strain Y.G.57.14 / Yellowstone #1) (Sulfolobus islandicus).